The following is a 118-amino-acid chain: Small ribosomal subunit protein uS13 (118 aa).

Positions 92–118 (RRNLPVRGQNTKNNARTRKGPTRPLKR) are disordered. The span at 106 to 118 (ARTRKGPTRPLKR) shows a compositional bias: basic residues.

It belongs to the universal ribosomal protein uS13 family. Part of the 30S ribosomal subunit. Forms a loose heterodimer with protein S19. Forms two bridges to the 50S subunit in the 70S ribosome.

Its function is as follows. Located at the top of the head of the 30S subunit, it contacts several helices of the 16S rRNA. In the 70S ribosome it contacts the 23S rRNA (bridge B1a) and protein L5 of the 50S subunit (bridge B1b), connecting the 2 subunits; these bridges are implicated in subunit movement. Contacts the tRNAs in the A and P-sites. This Psychrobacter arcticus (strain DSM 17307 / VKM B-2377 / 273-4) protein is Small ribosomal subunit protein uS13.